Consider the following 253-residue polypeptide: Zinc finger protein JAGGED (253 aa).

The interval 1 to 46 (MRHEENYLDLNNLPDDFSKDGNKQALEEGSSSGQRKKKGSKEGKDE) is disordered. The span at 16 to 26 (DFSKDGNKQAL) shows a compositional bias: basic and acidic residues. The segment at 51-73 (YECRFCSLKFCKSQALGGHMNRH) adopts a C2H2-type zinc-finger fold.

Interacts with GATA18/HAN. Expressed in the emerging leaf, sepal, petal, stamen and carpel primordia. Not expressed in the apical shoot meristem (SAM).

It localises to the nucleus. Functionally, controls the morphogenesis of lateral organs. Functions in lateral organ shape and is sufficient to induce proliferation and growth of lateral organ tissue. Is necessary and sufficient for bract formation, but its expression is excluded from the cryptic bract, which could be a cause of bractless flowers in Arabidopsis. Participates with FIL and YAB3 in regulating valve margin development. Functions with JGL to define stamen and carpel shape. Functions with AS1 and AS2 in the sepal and petal primordia to repress boundary-specifying genes for normal development of the organs. The polypeptide is Zinc finger protein JAGGED (JAG) (Arabidopsis thaliana (Mouse-ear cress)).